The chain runs to 435 residues: Serine--tRNA ligase (435 aa).

Threonine 242–glutamate 244 is an L-serine binding site. Arginine 273–glutamate 275 provides a ligand contact to ATP. Position 296 (glutamate 296) interacts with L-serine. An ATP-binding site is contributed by glutamate 360–serine 363. Residue serine 396 participates in L-serine binding.

It belongs to the class-II aminoacyl-tRNA synthetase family. Type-1 seryl-tRNA synthetase subfamily. In terms of assembly, homodimer. The tRNA molecule binds across the dimer.

Its subcellular location is the cytoplasm. It carries out the reaction tRNA(Ser) + L-serine + ATP = L-seryl-tRNA(Ser) + AMP + diphosphate + H(+). The catalysed reaction is tRNA(Sec) + L-serine + ATP = L-seryl-tRNA(Sec) + AMP + diphosphate + H(+). Its pathway is aminoacyl-tRNA biosynthesis; selenocysteinyl-tRNA(Sec) biosynthesis; L-seryl-tRNA(Sec) from L-serine and tRNA(Sec): step 1/1. Functionally, catalyzes the attachment of serine to tRNA(Ser). Is also able to aminoacylate tRNA(Sec) with serine, to form the misacylated tRNA L-seryl-tRNA(Sec), which will be further converted into selenocysteinyl-tRNA(Sec). The polypeptide is Serine--tRNA ligase (Aliivibrio salmonicida (strain LFI1238) (Vibrio salmonicida (strain LFI1238))).